The following is a 504-amino-acid chain: MTRGERVIAFIERFCIVPEGKLIGQPMRLDPFQKDFILAVYDNPAGTDMAILSIARKNGKTGLIAGILLAHLVGPEAVQNTQIVSGALSREQAAIVFNLAVKMVNLNPKLQEIVHITPSGKKLIGLPCNVEYKALSAEGKTTHGLSPILAILDETGQVRGPQDDFIDAITTAQGAHENPLLIVISTQAANDADLLSIWIDDAVKSKDPHIVCHVYEAPKDADISKRESWLAANPALGTFRSEKDMARQAEKAGRMPSFENTFRNLNLNQRVSTVSPFISRSVWELCGEMPINTPRKWYAGLDLSARNDLTALVIAGEADDGVWDVFPFFWTPQKTLEERTKTDRAPYDVWVREGLLRTTPGASVDYSFVVADIAEIIGDFDLTSMAFDRWRIDQFRKDADAIGLSLPLVEFGQGFKDMGPAVDTLESLMLNGRVRHGMHPVLTMCAVNAVVVKDAAGNRKLDKSKATGRIDGMVAMTMSVGAANGEVTEQGGDFDDFIFRPLSM.

The tract at residues 1–204 (MTRGERVIAF…LSIWIDDAVK (204 aa)) is ATPase activity. The Walker A motif signature appears at 54 to 61 (IARKNGKT). The Walker B motif motif lies at 149–154 (LAILDE). Residues 326–415 (FPFFWTPQKT…LPLVEFGQGF (90 aa)) are nuclease activity. Aspartate 471 contacts Mg(2+).

It belongs to the Hendrixvirinae large terminase family. In terms of assembly, homopentamer; forms a ring-like structure through which genomic DNA is translocated into the capsid. Interacts with the terminase small subunit; the active complex is composed of a pentamer ring of terminase large subunits and a nonamer ring of terminase small subunits. Interacts with the portal protein; this interaction allows the packaging of viral DNA. Mg(2+) serves as cofactor. It depends on Mn(2+) as a cofactor.

With respect to regulation, inhibited by zinc. Its function is as follows. The terminase large subunit acts as an ATP driven molecular motor necessary for viral DNA translocation into empty capsids and as an endonuclease that cuts the viral genome from the concetamer to initiate and to end a packaging reaction. The terminase lies at a unique vertex of the procapsid and is composed of two subunits, a small terminase subunit involved in viral DNA recognition (packaging sequence), and a large terminase subunit possessing endonucleolytic and ATPase activities. Both terminase subunits heterooligomerize and are docked on the portal protein to form the packaging machine. Packaging initiates by TerS recognizing the packaging sequence in the viral DNA. The nuclease activity of TerL cuts the viral DNA and the terminase-DNA complex binds to the portal of a procapsid shell. DNA is translocated into the capsid, powered by the packaging ATPase in TerL, which continues until the next site is encountered at which point the motor stops and again cuts the DNA to release the nucleocapsid filled with a unit-length genome ('unit length' packaging). The chain is Terminase, large subunit (2) from Escherichia coli (Bacteriophage HK97).